Consider the following 247-residue polypeptide: MNIIHVKNYEEMSQKAAALLFERIQQSPKITLGLATGGTPENTYTALIAKAKENGQSFSHVQTFNLDEYVGLPAEDKNSYRHYMEQRLFDHIDIPKEKTHLPNGMAPSLEEECRAYENMIADAGGIDIQLLGIGSNGHIGFNEPGTPFSSKTHVVELAEETRKANARYFPTLEDVPKQAITMGIQTIMEAKEILLLISGKAKAEAFAKLCSDEVTEAFPASILNKHPNVTVIADEEAASVYTQKAHL.

The active-site Proton acceptor; for enolization step is the Asp-67. The active-site For ring-opening step is Asn-136. His-138 acts as the Proton acceptor; for ring-opening step in catalysis. Catalysis depends on Glu-143, which acts as the For ring-opening step.

The protein belongs to the glucosamine/galactosamine-6-phosphate isomerase family. NagB subfamily.

It carries out the reaction alpha-D-glucosamine 6-phosphate + H2O = beta-D-fructose 6-phosphate + NH4(+). It participates in amino-sugar metabolism; N-acetylneuraminate degradation; D-fructose 6-phosphate from N-acetylneuraminate: step 5/5. Functionally, catalyzes the reversible isomerization-deamination of glucosamine 6-phosphate (GlcN6P) to form fructose 6-phosphate (Fru6P) and ammonium ion. In Shouchella clausii (strain KSM-K16) (Alkalihalobacillus clausii), this protein is Glucosamine-6-phosphate deaminase.